Consider the following 279-residue polypeptide: 3-methyl-2-oxobutanoate hydroxymethyltransferase (279 aa).

2 residues coordinate Mg(2+): aspartate 44 and aspartate 83. 3-methyl-2-oxobutanoate-binding positions include 44–45, aspartate 83, and lysine 113; that span reads DS. Glutamate 115 provides a ligand contact to Mg(2+). The Proton acceptor role is filled by glutamate 182.

The protein belongs to the PanB family. Homodecamer; pentamer of dimers. Mg(2+) serves as cofactor.

Its subcellular location is the cytoplasm. The catalysed reaction is 3-methyl-2-oxobutanoate + (6R)-5,10-methylene-5,6,7,8-tetrahydrofolate + H2O = 2-dehydropantoate + (6S)-5,6,7,8-tetrahydrofolate. The protein operates within cofactor biosynthesis; (R)-pantothenate biosynthesis; (R)-pantoate from 3-methyl-2-oxobutanoate: step 1/2. Functionally, catalyzes the reversible reaction in which hydroxymethyl group from 5,10-methylenetetrahydrofolate is transferred onto alpha-ketoisovalerate to form ketopantoate. The chain is 3-methyl-2-oxobutanoate hydroxymethyltransferase from Dehalococcoides mccartyi (strain CBDB1).